The primary structure comprises 900 residues: DNA mismatch repair protein MutS (900 aa).

Position 637–644 (637–644) interacts with ATP; the sequence is GPNMAGKS.

This sequence belongs to the DNA mismatch repair MutS family.

Functionally, this protein is involved in the repair of mismatches in DNA. It is possible that it carries out the mismatch recognition step. This protein has a weak ATPase activity. The polypeptide is DNA mismatch repair protein MutS (Methanosarcina barkeri (strain Fusaro / DSM 804)).